The chain runs to 187 residues: Pseudo histidine-containing phosphotransfer protein 1 (187 aa).

The 96-residue stretch at 74-169 (SPNFVEEVVT…AVLRQKLESY (96 aa)) folds into the HPt domain.

Its function is as follows. Functions as a two-component phosphorelay mediator between cytokinin sensor histidine kinases and response regulators (B-type ARRs). Plays an important role in propagating cytokinin signal transduction. The sequence is that of Pseudo histidine-containing phosphotransfer protein 1 from Oryza sativa subsp. japonica (Rice).